We begin with the raw amino-acid sequence, 318 residues long: MKHLIISEYGIYLGLESGRLVVKNKDDKKYFPLNRLATLSIAKKGVSFSSDLVEQFSLRGIKLFFLDFRGVAHSMLVGANQHAVVQARINQYRYIDRNALTLSIKLIAAKIKNQRATLNYFNKHHKSINLLNAIEELKRVAQLIKNAKTLNDVLGYEGYAANIYFSSLAKDKFLSASFANREGRGSQEIANSMLNFGYAILSSYILNAITNAGLEPYLGFLHQKRPGKMSLVLDLMEEYRAWVVDRVVIKLREQYKNKQYIDTKLKSILISEIQATIAKKYIYNGKKLKLEHIIQRQVYRLSGEFAGEHNYKPYIFKW.

Positions 157, 222, and 237 each coordinate Mn(2+).

The protein belongs to the CRISPR-associated endonuclease Cas1 family. As to quaternary structure, homodimer, forms a heterotetramer with a Cas2 homodimer. It depends on Mg(2+) as a cofactor. Requires Mn(2+) as cofactor.

In terms of biological role, CRISPR (clustered regularly interspaced short palindromic repeat), is an adaptive immune system that provides protection against mobile genetic elements (viruses, transposable elements and conjugative plasmids). CRISPR clusters contain spacers, sequences complementary to antecedent mobile elements, and target invading nucleic acids. CRISPR clusters are transcribed and processed into CRISPR RNA (crRNA). Acts as a dsDNA endonuclease. Involved in the integration of spacer DNA into the CRISPR cassette. In Francisella tularensis subsp. novicida (strain U112), this protein is CRISPR-associated endonuclease Cas1 1.